A 449-amino-acid polypeptide reads, in one-letter code: Bifunctional protein GlmU (449 aa).

The tract at residues Met-1–Arg-226 is pyrophosphorylase. UDP-N-acetyl-alpha-D-glucosamine contacts are provided by residues Leu-7–Gly-10, Lys-21, Gln-73, and Gly-78–Thr-79. A Mg(2+)-binding site is contributed by Asp-103. UDP-N-acetyl-alpha-D-glucosamine contacts are provided by Gly-140, Glu-155, Asn-170, and Asn-224. Asn-224 is a Mg(2+) binding site. The linker stretch occupies residues Val-227–Ala-247. Residues Gly-248–Ala-449 are N-acetyltransferase. The UDP-N-acetyl-alpha-D-glucosamine site is built by Arg-329 and Lys-347. The Proton acceptor role is filled by His-359. Tyr-362 and Asn-373 together coordinate UDP-N-acetyl-alpha-D-glucosamine. Acetyl-CoA-binding positions include Ala-376, Asn-382–Tyr-383, Ala-419, and Arg-436.

The protein in the N-terminal section; belongs to the N-acetylglucosamine-1-phosphate uridyltransferase family. This sequence in the C-terminal section; belongs to the transferase hexapeptide repeat family. Homotrimer. Mg(2+) serves as cofactor.

It is found in the cytoplasm. It catalyses the reaction alpha-D-glucosamine 1-phosphate + acetyl-CoA = N-acetyl-alpha-D-glucosamine 1-phosphate + CoA + H(+). The catalysed reaction is N-acetyl-alpha-D-glucosamine 1-phosphate + UTP + H(+) = UDP-N-acetyl-alpha-D-glucosamine + diphosphate. Its pathway is nucleotide-sugar biosynthesis; UDP-N-acetyl-alpha-D-glucosamine biosynthesis; N-acetyl-alpha-D-glucosamine 1-phosphate from alpha-D-glucosamine 6-phosphate (route II): step 2/2. It participates in nucleotide-sugar biosynthesis; UDP-N-acetyl-alpha-D-glucosamine biosynthesis; UDP-N-acetyl-alpha-D-glucosamine from N-acetyl-alpha-D-glucosamine 1-phosphate: step 1/1. It functions in the pathway bacterial outer membrane biogenesis; LPS lipid A biosynthesis. In terms of biological role, catalyzes the last two sequential reactions in the de novo biosynthetic pathway for UDP-N-acetylglucosamine (UDP-GlcNAc). The C-terminal domain catalyzes the transfer of acetyl group from acetyl coenzyme A to glucosamine-1-phosphate (GlcN-1-P) to produce N-acetylglucosamine-1-phosphate (GlcNAc-1-P), which is converted into UDP-GlcNAc by the transfer of uridine 5-monophosphate (from uridine 5-triphosphate), a reaction catalyzed by the N-terminal domain. The chain is Bifunctional protein GlmU from Thermosynechococcus vestitus (strain NIES-2133 / IAM M-273 / BP-1).